A 277-amino-acid chain; its full sequence is Alpha-ketoglutarate-dependent dioxygenase tstK (277 aa).

This sequence belongs to the asaB hydroxylase/desaturase family.

It carries out the reaction 2-[(1R,8S,14R,15R)-11-hydroxy-14,15-bis[(6E)-oct-6-en-1-yl]-3,5,9-trioxo-4,10-dioxatetracyclo[9.4.0.0(2,6).0(8,12)]pentadeca-2(6),12-dien-8-yl]acetate + 3 2-oxoglutarate + 3 O2 = phomoidride A + 3 succinate + 3 CO2 + H2O. Its function is as follows. Alpha-ketoglutarate-dependent dioxygenase; part of the gene cluster that mediates the biosynthesis of the antihypercholesterolemic agents phomoidrides which are dimeric anhydrides. Within the pathway, tstK is responsible for the iterative oxidation necessary to convert prephomoidride to phomoidride A. The pathway begins with the highly reducing polyketide synthase tstiA that catalyzes the formation of a C12-fatty acyl-ACP, starting from one acetate and 5 malonate units. The hydrolase tstM is involved in the release of the C12-fatty acyl chain from phiA. The alkylcitrate synthase (ACS) tstJ and the alkylcitrate dehydratase (ACDH) tstI then give rise to decarboxylated monomeric anhydrides by coupling the C12-fatty acyl chain with oxalacetic acid. The cyclase tstC is responsible for the dimerization of the monomeric anhydrides which leads to the production of prephomoidride that contains the characteristic bicyclo[4.3.1]deca-1,6-diene system of phomoidrides. Iterative oxidation catalyzed by the alpha-ketoglutarate-dependent dioxygenase tstK produced then phomoidride A. Finally, the methyltransferase tstE converts phomoidride A to phomoidride B via an acetalization reaction. The phosphatidylethanolamine-binding protein tstB and tstN are not essential for dimerization and their functions have still to be determined. This is Alpha-ketoglutarate-dependent dioxygenase tstK from Talaromyces stipitatus (strain ATCC 10500 / CBS 375.48 / QM 6759 / NRRL 1006) (Penicillium stipitatum).